We begin with the raw amino-acid sequence, 179 residues long: Adenine phosphoribosyltransferase (179 aa).

The protein belongs to the purine/pyrimidine phosphoribosyltransferase family. In terms of assembly, homodimer.

It localises to the cytoplasm. It catalyses the reaction AMP + diphosphate = 5-phospho-alpha-D-ribose 1-diphosphate + adenine. Its pathway is purine metabolism; AMP biosynthesis via salvage pathway; AMP from adenine: step 1/1. Its function is as follows. Catalyzes a salvage reaction resulting in the formation of AMP, that is energically less costly than de novo synthesis. The chain is Adenine phosphoribosyltransferase from Helicobacter pylori (strain ATCC 700392 / 26695) (Campylobacter pylori).